We begin with the raw amino-acid sequence, 756 residues long: 5-methyltetrahydropteroyltriglutamate--homocysteine methyltransferase (756 aa).

5-methyltetrahydropteroyltri-L-glutamate contacts are provided by residues 16–19 (RELK) and K116. L-homocysteine-binding positions include 435 to 437 (IGS) and E488. L-methionine-binding positions include 435 to 437 (IGS) and E488. 5-methyltetrahydropteroyltri-L-glutamate is bound by residues 519-520 (RC) and W565. D603 lines the L-homocysteine pocket. L-methionine is bound at residue D603. E609 contacts 5-methyltetrahydropteroyltri-L-glutamate. 3 residues coordinate Zn(2+): H645, C647, and E669. H698 (proton donor) is an active-site residue. A Zn(2+)-binding site is contributed by C730.

This sequence belongs to the vitamin-B12 independent methionine synthase family. Zn(2+) serves as cofactor.

It carries out the reaction 5-methyltetrahydropteroyltri-L-glutamate + L-homocysteine = tetrahydropteroyltri-L-glutamate + L-methionine. It functions in the pathway amino-acid biosynthesis; L-methionine biosynthesis via de novo pathway; L-methionine from L-homocysteine (MetE route): step 1/1. Catalyzes the transfer of a methyl group from 5-methyltetrahydrofolate to homocysteine resulting in methionine formation. This chain is 5-methyltetrahydropteroyltriglutamate--homocysteine methyltransferase, found in Marinobacter nauticus (strain ATCC 700491 / DSM 11845 / VT8) (Marinobacter aquaeolei).